Consider the following 504-residue polypeptide: Cytochrome P450 4A25 (504 aa).

The next 2 membrane-spanning stretches (helical) occupy residues 6–26 (LASA…LLLL) and 110–130 (APVL…LLNG). Position 451 (cysteine 451) interacts with heme.

The protein belongs to the cytochrome P450 family. The cofactor is heme.

Its subcellular location is the endoplasmic reticulum membrane. It carries out the reaction an omega-methyl-long-chain fatty acid + reduced [NADPH--hemoprotein reductase] + O2 = an omega-hydroxy-long-chain fatty acid + oxidized [NADPH--hemoprotein reductase] + H2O + H(+). Functionally, catalyzes the omega- and (omega-1)-hydroxylation of various fatty acids such as laurate and palmitate. Has no activity toward taurochenodeoxycholic acid. The chain is Cytochrome P450 4A25 (CYP4A25) from Sus scrofa (Pig).